The sequence spans 205 residues: NADH-quinone oxidoreductase subunit J (205 aa).

5 helical membrane-spanning segments follow: residues 1-21 (MPIF…CVVL), 26-46 (VYSV…MILL), 54-74 (LLIV…IMML), 89-109 (LSLS…TIIL), and 142-162 (FMLP…SCIT).

It belongs to the complex I subunit 6 family.

The protein localises to the cell membrane. It carries out the reaction a quinone + NADH + 5 H(+)(in) = a quinol + NAD(+) + 4 H(+)(out). Its function is as follows. NDH-1 shuttles electrons from NADH, via FMN and iron-sulfur (Fe-S) centers, to quinones in the respiratory chain. Couples the redox reaction to proton translocation (for every two electrons transferred, four hydrogen ions are translocated across the cytoplasmic membrane), and thus conserves the redox energy in a proton gradient. In Rickettsia prowazekii (strain Madrid E), this protein is NADH-quinone oxidoreductase subunit J (nuoJ).